A 93-amino-acid polypeptide reads, in one-letter code: Protein VNG_0358C (93 aa).

The protein is Protein VNG_0358C of Halobacterium salinarum (strain ATCC 700922 / JCM 11081 / NRC-1) (Halobacterium halobium).